A 76-amino-acid polypeptide reads, in one-letter code: U-scoloptoxin(13)-Sa1a (76 aa).

The signal sequence occupies residues 1-22 (MAYIFALIFAFVVCINTDVIQA).

It belongs to the scoloptoxin-13 family. In terms of processing, contains 4 disulfide bonds. Expressed by the venom gland.

It localises to the secreted. The protein is U-scoloptoxin(13)-Sa1a of Scolopendra alternans (Florida Keys giant centipede).